Consider the following 130-residue polypeptide: Small ribosomal subunit protein uS11c (130 aa).

It belongs to the universal ribosomal protein uS11 family. Part of the 30S ribosomal subunit.

The protein localises to the plastid. This chain is Small ribosomal subunit protein uS11c, found in Aneura mirabilis (Parasitic liverwort).